The following is a 188-amino-acid chain: Elongation factor P-like protein (188 aa).

It belongs to the elongation factor P family.

This is Elongation factor P-like protein from Xanthomonas axonopodis pv. citri (strain 306).